The following is a 625-amino-acid chain: Keratin, type II cytoskeletal 1 (625 aa).

Over residues 1–12 the composition is skewed to low complexity; sequence MSFQCSSRSLCR. The disordered stretch occupies residues 1 to 27; that stretch reads MSFQCSSRSLCRSGGGGGGRNFSSGSA. The interval 1–178 is head; sequence MSFQCSSRSL…DPQIQKVKSQ (178 aa). Arginine 12 is modified (omega-N-methylarginine). Serine 23 and serine 26 each carry phosphoserine. Residue arginine 51 is modified to Omega-N-methylarginine. Serine 69 is subject to Phosphoserine. Residues 171-319 are a coiled coil; the sequence is QIQKVKSQER…DIDFFSTLYQ (149 aa). The interval 179–214 is coil 1A; sequence EREQIKSLNDKFASFIDKVRFLEQQNQVLQTKWELL. The IF rod domain occupies 179–492; it reads EREQIKSLND…KLLEGEEIRM (314 aa). The interval 215 to 233 is linker 1; it reads QQVDTSTRTQNLDPFFESY. The tract at residues 234 to 325 is coil 1B; it reads ISNLRRQVDS…TLYQMELSQM (92 aa). N6,N6-dimethyllysine is present on lysine 275. The linker 12 stretch occupies residues 326 to 349; that stretch reads QTQISETNVVLSMDNNRTLDLDGI. Residues 350–488 form a coil 2 region; it reads IAEVKAQYDS…ATYRKLLEGE (139 aa). Residues 388-475 adopt a coiled-coil conformation; sequence DSVKNTKMEI…ELMNTKLALD (88 aa). A tail region spans residues 489-625; it reads EIRMSGECTP…VSTTYSRGTN (137 aa). Disordered regions lie at residues 496 to 525 and 560 to 625; these read CTPN…YGSG and SGGG…RGTN. The span at 500–515 shows a compositional bias: low complexity; the sequence is VSVSVSTSHTSMSGTS. 2 stretches are compositionally biased toward gly residues: residues 516–525 and 560–606; these read SRGGGRYGSG and SGGG…GGVK. Omega-N-methylarginine occurs at positions 517, 574, and 596. The segment covering 613-625 has biased composition (polar residues); sequence VKFVSTTYSRGTN.

Belongs to the intermediate filament family. In terms of assembly, heterotetramer of two type I and two type II keratins. Heterodimer with KRT10. Two heterodimers of KRT1 and KRT10 form a heterotetramer. Forms a heterodimer with KRT14; the interaction is more abundant in the absence of KRT5. Interacts with ITGB1 in the presence of RACK1 and SRC, and with RACK1. Interacts with C1QBP; the association represents a cell surface kininogen receptor. Interacts with EPPK1; interaction is dependent of higher-order structure of intermediate filament. Post-translationally, undergoes deimination of some arginine residues (citrullination).

The protein resides in the cell membrane. The protein localises to the cytoplasm. In terms of biological role, may regulate the activity of kinases such as PKC and SRC via binding to integrin beta-1 (ITB1) and the receptor of activated protein C kinase 1 (RACK1). In complex with C1QBP is a high affinity receptor for kininogen-1/HMWK. This is Keratin, type II cytoskeletal 1 from Rattus norvegicus (Rat).